Here is a 489-residue protein sequence, read N- to C-terminus: Aerolysin (489 aa).

The first 24 residues, 1 to 24 (MMNRIITANLANLASSLMLAQVLG), serve as a signal peptide directing secretion. 2 cysteine pairs are disulfide-bonded: cysteine 44/cysteine 100 and cysteine 184/cysteine 189. Residues 70-86 (WQITGLADRWVIMGPGY) are interaction with host N-linked glycan. Positions 257–289 (YSLSEKVTTKNKFQWPLVGETELAIEIAASQSW) are part of the transmembrane beta-barrel after proteolytic activation of the toxin and insertion into the host membrane. An interaction with glycans from host GPI-anchor region spans residues 347 to 356 (RWGGNAWYTH). The propeptide occupies 445 to 489 (TRSAKAAQLRSASAEEVALTSVDLDSEALANEGFGNVSLTIVPVQ).

It belongs to the aerolysin family. Homodimer in solution; homoheptamer in the host membrane. After binding to GPI-anchored proteins in target membranes and proteolytic removal of the C-terminal propeptide, the protein assembles into a heptameric pre-pore complex. A further conformation change leads to insertion into the host membrane. Proteolytic cleavage and subsequent release of the propeptide trigger a major conformation change, leading to the formation of a heptameric pre-pore that then inserts into the host membrane.

It is found in the secreted. It localises to the host cell membrane. Secreted, cytolytic toxin that forms pores in host membranes after proteolytic removal of a C-terminal propeptide, leading to destruction of the membrane permeability barrier and cell death. The pores are formed by transmembrane beta-strands and are approximately 3 nm in diameter. This Aeromonas salmonicida protein is Aerolysin (ash3).